Consider the following 161-residue polypeptide: SsrA-binding protein (161 aa).

The interval 138 to 161 (DKRTDSKEKDWNRDKARIMKSSLR) is disordered. The span at 139-154 (KRTDSKEKDWNRDKAR) shows a compositional bias: basic and acidic residues.

It belongs to the SmpB family.

The protein localises to the cytoplasm. In terms of biological role, required for rescue of stalled ribosomes mediated by trans-translation. Binds to transfer-messenger RNA (tmRNA), required for stable association of tmRNA with ribosomes. tmRNA and SmpB together mimic tRNA shape, replacing the anticodon stem-loop with SmpB. tmRNA is encoded by the ssrA gene; the 2 termini fold to resemble tRNA(Ala) and it encodes a 'tag peptide', a short internal open reading frame. During trans-translation Ala-aminoacylated tmRNA acts like a tRNA, entering the A-site of stalled ribosomes, displacing the stalled mRNA. The ribosome then switches to translate the ORF on the tmRNA; the nascent peptide is terminated with the 'tag peptide' encoded by the tmRNA and targeted for degradation. The ribosome is freed to recommence translation, which seems to be the essential function of trans-translation. The chain is SsrA-binding protein from Aliivibrio fischeri (strain MJ11) (Vibrio fischeri).